Reading from the N-terminus, the 467-residue chain is D-hydantoinase (467 aa).

Positions 65, 67, and 156 each coordinate Zn(2+). N6-carboxylysine is present on Lys-156. Tyr-161 provides a ligand contact to substrate. Zn(2+) contacts are provided by His-189 and His-245. Ser-294 is a binding site for substrate. A Zn(2+)-binding site is contributed by Asp-321. Asn-343 is a substrate binding site.

It belongs to the metallo-dependent hydrolases superfamily. Hydantoinase/dihydropyrimidinase family. In terms of assembly, homotetramer. Zn(2+) is required as a cofactor. Post-translationally, carboxylation allows a single lysine to coordinate two zinc ions.

Functionally, catalyzes the stereospecific hydrolysis of the cyclic amide bond of D-hydantoin derivatives. The polypeptide is D-hydantoinase (hyuA) (Streptomyces coelicolor (strain ATCC BAA-471 / A3(2) / M145)).